Reading from the N-terminus, the 286-residue chain is MLGRAQRTLKRKVCYSGVGVHFGKAAMLTLEPAEENTGVVFSHHAASEQYIPARLANVCGTGRSTTLSLDGSVISTVEHLLASLYSFGVDNVRIYCSEDEIPIGDGSAQVFMDLIDQAGIQEQEQTVQIARLAHPVYYQYQDTILAAFPSDEFKISYTLHYSHNSTIGTQYRSLVISEESFRKEIAPCRTFALYSELCFLMEKGLIGGGCVGNAVLFKDDGVISLGKLRFPDEPVRHKILDLIGDLSLVGTPFLAHVIAVGSGHSSNIALGNRILEALQHEQELVK.

Residues His79, His237, and Asp241 each contribute to the Zn(2+) site. The active-site Proton donor is His264.

The protein belongs to the LpxC family. The cofactor is Zn(2+).

The catalysed reaction is a UDP-3-O-[(3R)-3-hydroxyacyl]-N-acetyl-alpha-D-glucosamine + H2O = a UDP-3-O-[(3R)-3-hydroxyacyl]-alpha-D-glucosamine + acetate. It functions in the pathway glycolipid biosynthesis; lipid IV(A) biosynthesis; lipid IV(A) from (3R)-3-hydroxytetradecanoyl-[acyl-carrier-protein] and UDP-N-acetyl-alpha-D-glucosamine: step 2/6. Its function is as follows. Catalyzes the hydrolysis of UDP-3-O-myristoyl-N-acetylglucosamine to form UDP-3-O-myristoylglucosamine and acetate, the committed step in lipid A biosynthesis. The chain is UDP-3-O-acyl-N-acetylglucosamine deacetylase from Chlamydia trachomatis serovar A (strain ATCC VR-571B / DSM 19440 / HAR-13).